The sequence spans 190 residues: Large ribosomal subunit protein uL10 (190 aa).

The interval 170-190 is disordered; the sequence is AAGAPAEAAPVEAPAAETVDA.

It belongs to the universal ribosomal protein uL10 family. In terms of assembly, part of the ribosomal stalk of the 50S ribosomal subunit. The N-terminus interacts with L11 and the large rRNA to form the base of the stalk. The C-terminus forms an elongated spine to which L12 dimers bind in a sequential fashion forming a multimeric L10(L12)X complex.

In terms of biological role, forms part of the ribosomal stalk, playing a central role in the interaction of the ribosome with GTP-bound translation factors. This Kineococcus radiotolerans (strain ATCC BAA-149 / DSM 14245 / SRS30216) protein is Large ribosomal subunit protein uL10.